The primary structure comprises 166 residues: uncharacterized protein (166 aa).

The residue at position 2 (alanine 2) is an N-acetylalanine.

In terms of assembly, homodimer.

This is an uncharacterized protein from Arabidopsis thaliana (Mouse-ear cress).